We begin with the raw amino-acid sequence, 186 residues long: MSDEYDENDLKRRMDGAIESLRKEFAGLRTGRASAGLLEPIKVDAYGTPTPINQLGNISVPEPRMITLQVWDKNMVAAVDKAIRNSGIGLNPVMEGQLLRIPIPPLNEERRAEIAKLAGNYAEHARVAVRNVRRDGMDALKKMEKDGDLSEDEQKAFSEDVQKLTNEAIKRIDENLKSKQEEIMQV.

The protein belongs to the RRF family.

It localises to the cytoplasm. Its function is as follows. Responsible for the release of ribosomes from messenger RNA at the termination of protein biosynthesis. May increase the efficiency of translation by recycling ribosomes from one round of translation to another. This chain is Ribosome-recycling factor, found in Maricaulis maris (strain MCS10) (Caulobacter maris).